The chain runs to 691 residues: Elongation factor G (691 aa).

In terms of domain architecture, tr-type G spans 6 to 281 (SRYRNIGIMA…GVVDFLPSPI (276 aa)). Residues 15 to 22 (AHIDAGKT), 79 to 83 (DTPGH), and 133 to 136 (NKMD) each bind GTP.

The protein belongs to the TRAFAC class translation factor GTPase superfamily. Classic translation factor GTPase family. EF-G/EF-2 subfamily.

It is found in the cytoplasm. Catalyzes the GTP-dependent ribosomal translocation step during translation elongation. During this step, the ribosome changes from the pre-translocational (PRE) to the post-translocational (POST) state as the newly formed A-site-bound peptidyl-tRNA and P-site-bound deacylated tRNA move to the P and E sites, respectively. Catalyzes the coordinated movement of the two tRNA molecules, the mRNA and conformational changes in the ribosome. The protein is Elongation factor G of Wolbachia pipientis subsp. Culex pipiens (strain wPip).